We begin with the raw amino-acid sequence, 845 residues long: Complement component C7 (845 aa).

An N-terminal signal peptide occupies residues 1-22 (MQVTSLLILVCFIAAFQVFSRA). Residues 27 to 80 (NCKWDSYGPWSECNGCTKTQTRRRSVAVYGQYGGYPCEGSAFETQSCKPERGCP) form the TSP type-1 1 domain. 6 disulfide bridges follow: C28–C63, C39–C73, C42–C79, C85–C96, C91–C109, and C103–C119. Residues 84 to 120 (GCGDRFRCFSGQCISKSLVCNGDPDCEEDGADEDKCE) enclose the LDL-receptor class A domain. The 335-residue stretch at 122–456 (VANPSCNIDK…EYFDEFDPCH (335 aa)) folds into the MACPF domain. An N-linked (GlcNAc...) asparagine glycan is attached at N124. C127 and C164 form a disulfide bridge. A glycan (N-linked (GlcNAc...) asparagine) is linked at N201. 21 cysteine pairs are disulfide-bonded: C336/C353, C433/C560, C455/C505, C457/C473, C460/C475, C477/C486, C512/C545, C523/C535, C571/C613, C599/C626, C631/C673, C659/C688, C703/C714, C716/C751, C722/C744, C729/C764, C774/C783, C777/C790, C792/C826, C798/C819, and C806/C839. An EGF-like domain is found at 457–487 (CRPCQNGGLAIVVETQCQCLCKPYTFGSACE). The region spanning 500 to 549 (DGGWNCWSSWSPCVQGKRTRSRECNNPPPRDDGKSCLGETTESKQCEDQD) is the TSP type-1 2 domain. CCP stretches follow at residues 545 to 615 (CEDQ…RCGE) and 616 to 693 (DLQW…QKAT). Sushi domains lie at 569–628 (EFCL…HCQK) and 629–690 (LACV…KCVQ). Factor I module (FIM) regions lie at residues 695–771 (TPPP…SPAE) and 772–844 (KVCG…EEAA). The N-linked (GlcNAc...) asparagine glycan is linked to N755.

The protein belongs to the complement C6/C7/C8/C9 family. In terms of assembly, monomer or dimer; as a C5b-7 complex it can also form multimeric rosettes. Component of the membrane attack complex (MAC), composed of complement C5b, C6, C7, C8A, C8B, C8G and multiple copies of the pore-forming subunit C9. In terms of processing, C-, N- and O-glycosylated. O-glycosylated with core 1 or possibly core 8 glycans.

It is found in the secreted. The protein localises to the target cell membrane. Membrane attack complex (MAC) assembly is inhibited by CD59, thereby protecting self-cells from damage during complement activation. MAC assembly is also inhibited by clusterin (CLU) chaperones that inhibit polymerization of C9. Component of the membrane attack complex (MAC), a multiprotein complex activated by the complement cascade, which inserts into a target cell membrane and forms a pore, leading to target cell membrane rupture and cell lysis. The MAC is initiated by proteolytic cleavage of C5 into complement C5b in response to the classical, alternative, lectin and GZMK complement pathways. The complement pathways consist in a cascade of proteins that leads to phagocytosis and breakdown of pathogens and signaling that strengthens the adaptive immune system. C7 serves as a membrane anchor. During MAC assembly, associates with C5b and C6 to form the C5b-7 complex, a key lipophilic precursor of the MAC complex, which associates with the outer leaflet and reduces the energy for membrane bending. This chain is Complement component C7, found in Mus musculus (Mouse).